The following is a 340-amino-acid chain: Functional amyloid subunit FapC (340 aa).

An N-terminal signal peptide occupies residues 1–24 (MKATMVLTPLALAMAAVLSVSAYA). A FapC_R1 repeat occupies 67–100 (NNASVSGSIKDASGNVGVNVAAGDNNQQANAAAL). Residues 101–133 (ASADASFVFGTATASTSVLQSGYGNTLNNYSNP) are linker 1. A FapC_R2 repeat occupies 134-167 (NTASLSNSANNVSGNLGVNVAAGNFNQQKNDLAA). The segment at 168–290 (AVSNGQYSTA…AIVGFKTPVT (123 aa)) is linker 2. The stretch at 291 to 324 (NNASLSNSLQNVSGNVGVNIAAGGGNQQSNSLSI) is one FapC_R3 repeat. Positions 328 to 331 (CSSC) match the Cys-X-X-Cys motif.

It belongs to the FapB/FapC family. As to quaternary structure, the major component of purified amyloid fibrils. Fibrils are resistant to boiling in 2% (weight/vol) SDS and require &gt;90% (vol/vol) formic acid to dissolve. Interacts with FapA in vitro.

Its subcellular location is the fimbrium. The protein resides in the secreted. Its function is as follows. The major functional amyloid subunit in this bacterium. Upon overexpression of the endogenous six-gene locus (fapA-fapF), cells form large clumps during liquid growth, make large amounts of biofilm and produce amyloid fibrils. In Pseudomonas aeruginosa (strain ATCC 15692 / DSM 22644 / CIP 104116 / JCM 14847 / LMG 12228 / 1C / PRS 101 / PAO1), this protein is Functional amyloid subunit FapC.